A 277-amino-acid chain; its full sequence is Undecaprenyl-diphosphatase (277 aa).

The next 6 membrane-spanning stretches (helical) occupy residues 88–108 (MGWL…LFQD), 117–137 (MWIV…ADAV), 157–179 (FAQA…AGLL), 191–211 (SFLL…YKTV), 227–247 (LATV…LKFV), and 255–275 (FVWY…FNVI).

The protein belongs to the UppP family.

The protein resides in the cell membrane. The catalysed reaction is di-trans,octa-cis-undecaprenyl diphosphate + H2O = di-trans,octa-cis-undecaprenyl phosphate + phosphate + H(+). Its function is as follows. Catalyzes the dephosphorylation of undecaprenyl diphosphate (UPP). Confers resistance to bacitracin. This chain is Undecaprenyl-diphosphatase, found in Paenarthrobacter aurescens (strain TC1).